Here is a 717-residue protein sequence, read N- to C-terminus: Cleavage stimulation factor subunit 3 (717 aa).

An N-acetylserine modification is found at Ser2. HAT repeat units lie at residues 45 to 77 (QPID…AEIK), 79 to 110 (KNYD…YVRE), 117 to 152 (SYKE…FLKG), 163 to 196 (QRIT…YEEG), 221 to 261 (KEYE…WEKS), 271 to 303 (LITK…YLEQ), 319 to 352 (LFSD…YEES), 354 to 387 (MKYE…FARR), and 458 to 494 (NEDN…FESN). A disordered region spans residues 683–704 (AVKRPNEDSDEDEEKGAVVPPV). Position 691 is a phosphoserine (Ser691).

As to quaternary structure, homodimer. The CSTF complex is composed of CSTF1 (50 kDa subunit), CSTF2 (64 kDa subunit) and CSTF3 (77 kDa subunit). CSTF3 directly interacts with CSTF1 and CSTF2. Interacts with FIP1L1.

The protein localises to the nucleus. In terms of biological role, one of the multiple factors required for polyadenylation and 3'-end cleavage of mammalian pre-mRNAs. This is Cleavage stimulation factor subunit 3 (Cstf3) from Mus musculus (Mouse).